Here is a 334-residue protein sequence, read N- to C-terminus: Glycerol-3-phosphate dehydrogenase [NAD(P)+] (334 aa).

NADPH is bound by residues serine 11, tryptophan 12, arginine 32, and lysine 106. Sn-glycerol 3-phosphate-binding residues include lysine 106 and glycine 136. NADPH is bound at residue alanine 140. The sn-glycerol 3-phosphate site is built by lysine 191, aspartate 244, serine 254, arginine 255, and asparagine 256. The active-site Proton acceptor is lysine 191. Arginine 255 lines the NADPH pocket. Residues valine 279 and glutamate 281 each coordinate NADPH.

This sequence belongs to the NAD-dependent glycerol-3-phosphate dehydrogenase family.

The protein resides in the cytoplasm. The enzyme catalyses sn-glycerol 3-phosphate + NAD(+) = dihydroxyacetone phosphate + NADH + H(+). It carries out the reaction sn-glycerol 3-phosphate + NADP(+) = dihydroxyacetone phosphate + NADPH + H(+). The protein operates within membrane lipid metabolism; glycerophospholipid metabolism. Its function is as follows. Catalyzes the reduction of the glycolytic intermediate dihydroxyacetone phosphate (DHAP) to sn-glycerol 3-phosphate (G3P), the key precursor for phospholipid synthesis. This chain is Glycerol-3-phosphate dehydrogenase [NAD(P)+], found in Parafrankia sp. (strain EAN1pec).